Consider the following 591-residue polypeptide: Aspartate--tRNA ligase (591 aa).

Glutamate 173 lines the L-aspartate pocket. The tract at residues 197–200 (QLFK) is aspartate. Arginine 219 is an L-aspartate binding site. Residues 219–221 (RDE) and glutamine 228 each bind ATP. Residue histidine 448 participates in L-aspartate binding. An ATP-binding site is contributed by glutamate 482. An L-aspartate-binding site is contributed by arginine 489. 534–537 (GLDR) contributes to the ATP binding site.

It belongs to the class-II aminoacyl-tRNA synthetase family. Type 1 subfamily. Homodimer.

The protein resides in the cytoplasm. It carries out the reaction tRNA(Asp) + L-aspartate + ATP = L-aspartyl-tRNA(Asp) + AMP + diphosphate. Catalyzes the attachment of L-aspartate to tRNA(Asp) in a two-step reaction: L-aspartate is first activated by ATP to form Asp-AMP and then transferred to the acceptor end of tRNA(Asp). The polypeptide is Aspartate--tRNA ligase (Shewanella oneidensis (strain ATCC 700550 / JCM 31522 / CIP 106686 / LMG 19005 / NCIMB 14063 / MR-1)).